We begin with the raw amino-acid sequence, 2193 residues long: Genome polyprotein (2193 aa).

Glycine 2 carries the N-myristoyl glycine; by host lipid modification. Topologically, residues 2–1503 (GAQVSTQKTG…HVSRAFICLQ (1502 aa)) are cytoplasmic. An amphipathic alpha-helix region spans residues 565-582 (QLLQGDVEEAVNRAVARV). Residues histidine 880 and aspartate 898 each act as for protease 2A activity in the active site. The Zn(2+) site is built by cysteine 915 and cysteine 917. Cysteine 969 acts as the For protease 2A activity in catalysis. 2 residues coordinate Zn(2+): cysteine 975 and histidine 977. The segment at 1109 to 1181 (SNGWLKKFTE…EQSAPSQSDQ (73 aa)) is membrane-binding. The tract at residues 1109 to 1247 (SNGWLKKFTE…SPGAGKSVAT (139 aa)) is oligomerization. The segment at 1130–1134 (AIKIQ) is RNA-binding. The SF3 helicase domain occupies 1213–1369 (EKKMSNYIQF…SMYSQNGKIN (157 aa)). The Zn(2+) site is built by cysteine 1377, cysteine 1389, and cysteine 1394. The segment at 1377-1394 (CDEECCPVNFKRCCPLVC) adopts a C4-type; degenerate zinc-finger fold. Residues 1421–1428 (EYNHRHSV) are RNA-binding. The segment at 1432–1437 (LEALFQ) is oligomerization. An intramembrane segment occupies 1504–1519 (ALTTFVSVAGIIYIIY). Residues 1520–2193 (KLFAGFQGAY…TLRRKWLDSF (674 aa)) are Cytoplasmic-facing. O-(5'-phospho-RNA)-tyrosine is present on tyrosine 1529. The 179-residue stretch at 1549–1727 (GPAFEFAVAM…FSAALLRHYF (179 aa)) folds into the Peptidase C3 domain. Active-site for protease 3C activity residues include histidine 1588, glutamate 1619, and cysteine 1695. Residues 1958-2074 (GHLIAFDYSG…SYPWPIDASL (117 aa)) enclose the RdRp catalytic domain. Residues aspartate 1964 and aspartate 2060 each contribute to the Mg(2+) site.

This sequence belongs to the picornaviruses polyprotein family. In terms of assembly, interacts with capsid protein VP1 and capsid protein VP3 to form heterotrimeric protomers. As to quaternary structure, interacts with capsid protein VP0, and capsid protein VP3 to form heterotrimeric protomers. Five protomers subsequently associate to form pentamers which serve as building blocks for the capsid. Interacts with capsid protein VP2, capsid protein VP3 and capsid protein VP4 following cleavage of capsid protein VP0. Interacts with capsid protein VP1 and capsid protein VP3 in the mature capsid. Interacts with host CD55; this interaction promotes virus attachment to the host cell and subsequent internalization. In terms of assembly, interacts with capsid protein VP0 and capsid protein VP1 to form heterotrimeric protomers. Five protomers subsequently associate to form pentamers which serve as building blocks for the capsid. Interacts with capsid protein VP4 in the mature capsid. Interacts with protein 2C; this interaction may be important for virion morphogenesis. Interacts with host CD55; this interaction promotes virus attachment to the host cell and subsequent internalization. As to quaternary structure, interacts with capsid protein VP1 and capsid protein VP3. Homodimer. In terms of assembly, homohexamer; forms a hexameric ring structure with 6-fold symmetry characteristic of AAA+ ATPases. Interacts (via N-terminus) with host RTN3 (via reticulon domain); this interaction is important for viral replication. Interacts with capsid protein VP3; this interaction may be important for virion morphogenesis. As to quaternary structure, interacts with protein 3CD. Homodimer. Interacts with host GBF1. Interacts (via GOLD domain) with host ACBD3 (via GOLD domain); this interaction allows the formation of a viral protein 3A/ACBD3 heterotetramer with a 2:2 stoichiometry, which will stimulate the recruitment of host PI4KB in order to synthesize PI4P at the viral RNA replication sites. In terms of assembly, interacts with RNA-directed RNA polymerase. As to quaternary structure, interacts with protein 3AB and with RNA-directed RNA polymerase. Interacts with Viral protein genome-linked and with protein 3CD. Mg(2+) serves as cofactor. In terms of processing, specific enzymatic cleavages in vivo by the viral proteases yield processing intermediates and the mature proteins. Myristoylation is required for the formation of pentamers during virus assembly. Further assembly of 12 pentamers and a molecule of genomic RNA generates the provirion. Post-translationally, during virion maturation, immature virions are rendered infectious following cleavage of VP0 into VP4 and VP2. This maturation seems to be an autocatalytic event triggered by the presence of RNA in the capsid and it is followed by a conformational change infectious virion. In terms of processing, myristoylation is required during RNA encapsidation and formation of the mature virus particle. VPg is uridylylated by the polymerase into VPg-pUpU. This acts as a nucleotide-peptide primer for the genomic RNA replication.

It localises to the virion. The protein localises to the host cytoplasm. Its subcellular location is the host cytoplasmic vesicle membrane. It is found in the host nucleus. It carries out the reaction a ribonucleoside 5'-triphosphate + H2O = a ribonucleoside 5'-diphosphate + phosphate + H(+). The catalysed reaction is Selective cleavage of Tyr-|-Gly bond in the picornavirus polyprotein.. The enzyme catalyses RNA(n) + a ribonucleoside 5'-triphosphate = RNA(n+1) + diphosphate. It catalyses the reaction Selective cleavage of Gln-|-Gly bond in the poliovirus polyprotein. In other picornavirus reactions Glu may be substituted for Gln, and Ser or Thr for Gly.. Replication or transcription is subject to high level of random mutations by the nucleotide analog ribavirin. In terms of biological role, forms an icosahedral capsid of pseudo T=3 symmetry with capsid proteins VP2 and VP3. The capsid is 300 Angstroms in diameter, composed of 60 copies of each capsid protein and enclosing the viral positive strand RNA genome. Capsid protein VP1 mainly forms the vertices of the capsid. Capsid protein VP1 interacts with host cell receptor to provide virion attachment to target host cells. This attachment induces virion internalization. Tyrosine kinases are probably involved in the entry process. After binding to its receptor, the capsid undergoes conformational changes. Capsid protein VP1 N-terminus (that contains an amphipathic alpha-helix) and capsid protein VP4 are externalized. Together, they shape a pore in the host membrane through which viral genome is translocated to host cell cytoplasm. Functionally, forms an icosahedral capsid of pseudo T=3 symmetry with capsid proteins VP2 and VP3. The capsid is 300 Angstroms in diameter, composed of 60 copies of each capsid protein and enclosing the viral positive strand RNA genome. Its function is as follows. Lies on the inner surface of the capsid shell. After binding to the host receptor, the capsid undergoes conformational changes. Capsid protein VP4 is released, Capsid protein VP1 N-terminus is externalized, and together, they shape a pore in the host membrane through which the viral genome is translocated into the host cell cytoplasm. Component of immature procapsids, which is cleaved into capsid proteins VP4 and VP2 after maturation. Allows the capsid to remain inactive before the maturation step. In terms of biological role, cysteine protease that cleaves viral polyprotein and specific host proteins. It is responsible for the autocatalytic cleavage between the P1 and P2 regions, which is the first cleavage occurring in the polyprotein. Also cleaves the host translation initiation factor EIF4G1, in order to shut down the capped cellular mRNA translation. Inhibits the host nucleus-cytoplasm protein and RNA trafficking by cleaving host members of the nuclear pores. Counteracts stress granule formation probably by antagonizing its assembly or promoting its dissassembly. Functionally, plays an essential role in the virus replication cycle by acting as a viroporin. Creates a pore in the host endoplasmic reticulum and as a consequence releases Ca2+ in the cytoplasm of infected cell. In turn, high levels of cytoplasmic calcium may trigger membrane trafficking and transport of viral ER-associated proteins to viroplasms, sites of viral genome replication. Its function is as follows. Induces and associates with structural rearrangements of intracellular membranes. Displays RNA-binding, nucleotide binding and NTPase activities. May play a role in virion morphogenesis and viral RNA encapsidation by interacting with the capsid protein VP3. Localizes the viral replication complex to the surface of membranous vesicles. Together with protein 3CD binds the Cis-Active RNA Element (CRE) which is involved in RNA synthesis initiation. Acts as a cofactor to stimulate the activity of 3D polymerase, maybe through a nucleid acid chaperone activity. In terms of biological role, localizes the viral replication complex to the surface of membranous vesicles. It inhibits host cell endoplasmic reticulum-to-Golgi apparatus transport and causes the disassembly of the Golgi complex, possibly through GBF1 interaction. This would result in depletion of MHC, trail receptors and IFN receptors at the host cell surface. Plays an essential role in viral RNA replication by recruiting ACBD3 and PI4KB at the viral replication sites, thereby allowing the formation of the rearranged membranous structures where viral replication takes place. Functionally, acts as a primer for viral RNA replication and remains covalently bound to viral genomic RNA. VPg is uridylylated prior to priming replication into VPg-pUpU. The oriI viral genomic sequence may act as a template for this. The VPg-pUpU is then used as primer on the genomic RNA poly(A) by the RNA-dependent RNA polymerase to replicate the viral genome. During genome replication, the VPg-RNA linkage is removed by the host TDP2, thereby accelerating replication. During the late stage of the replication cycle, host TDP2 is excluded from sites of viral RNA synthesis and encapsidation, allowing for the generation of progeny virions. Its function is as follows. Involved in the viral replication complex and viral polypeptide maturation. It exhibits protease activity with a specificity and catalytic efficiency that is different from protease 3C. Protein 3CD lacks polymerase activity. Protein 3CD binds to the 5'UTR of the viral genome. Replicates the viral genomic RNA on the surface of intracellular membranes. May form linear arrays of subunits that propagate along a strong head-to-tail interaction called interface-I. Covalently attaches UMP to a tyrosine of VPg, which is used to prime RNA synthesis. The positive stranded RNA genome is first replicated at virus induced membranous vesicles, creating a dsRNA genomic replication form. This dsRNA is then used as template to synthesize positive stranded RNA genomes. ss(+)RNA genomes are either translated, replicated or encapsidated. In terms of biological role, major viral protease that mediates proteolytic processing of the polyprotein. Cleaves host EIF5B, contributing to host translation shutoff. Also cleaves host PABPC1, contributing to host translation shutoff. Cleaves host NLRP1, triggers host N-glycine-mediated degradation of the autoinhibitory NLRP1 N-terminal fragment. This Echovirus 12 (strain Travis) protein is Genome polyprotein.